The sequence spans 470 residues: 3-oxo-isoapionate kinase (470 aa).

The substrate site is built by D30 and R78. ATP-binding positions include S291, 403-406 (GGDS), and G451.

This sequence belongs to the four-carbon acid sugar kinase family.

The enzyme catalyses 3-oxoisoapionate + ATP = 3-oxoisoapionate 4-phosphate + ADP + H(+). It functions in the pathway carbohydrate metabolism. Functionally, involved in catabolism of D-apiose. Catalyzes the phosphorylation of 3-oxo-isoapionate to 3-oxo-isoapionate 4-phosphate. The protein is 3-oxo-isoapionate kinase of Paraburkholderia graminis (strain ATCC 700544 / DSM 17151 / LMG 18924 / NCIMB 13744 / C4D1M).